The primary structure comprises 400 residues: Probable glucan endo-1,6-beta-glucosidase B (400 aa).

Residues 1 to 17 (MIRRLAALSALSGLATA) form the signal peptide. Residue N30 is glycosylated (N-linked (GlcNAc...) asparagine). Catalysis depends on E219, which acts as the Proton donor. An N-linked (GlcNAc...) asparagine glycan is attached at N272. The active-site Nucleophile is E320.

Belongs to the glycosyl hydrolase 5 (cellulase A) family.

Its subcellular location is the secreted. It carries out the reaction Random hydrolysis of (1-&gt;6)-linkages in (1-&gt;6)-beta-D-glucans.. Beta-glucanases participate in the metabolism of beta-glucan, the main structural component of the cell wall. Acts on lutean, pustulan and 1,6-oligo-beta-D-glucosides. In Neosartorya fischeri (strain ATCC 1020 / DSM 3700 / CBS 544.65 / FGSC A1164 / JCM 1740 / NRRL 181 / WB 181) (Aspergillus fischerianus), this protein is Probable glucan endo-1,6-beta-glucosidase B (exgB).